The following is a 945-amino-acid chain: Valine--tRNA ligase (945 aa).

Residues Pro-42–His-52 carry the 'HIGH' region motif. The short motif at Lys-552–Ser-556 is the 'KMSKS' region element. Position 555 (Lys-555) interacts with ATP. The stretch at Asp-879 to Asp-945 forms a coiled coil.

Belongs to the class-I aminoacyl-tRNA synthetase family. ValS type 1 subfamily. As to quaternary structure, monomer.

The protein localises to the cytoplasm. The enzyme catalyses tRNA(Val) + L-valine + ATP = L-valyl-tRNA(Val) + AMP + diphosphate. Catalyzes the attachment of valine to tRNA(Val). As ValRS can inadvertently accommodate and process structurally similar amino acids such as threonine, to avoid such errors, it has a 'posttransfer' editing activity that hydrolyzes mischarged Thr-tRNA(Val) in a tRNA-dependent manner. This Neisseria gonorrhoeae (strain ATCC 700825 / FA 1090) protein is Valine--tRNA ligase.